Reading from the N-terminus, the 262-residue chain is Plant intracellular Ras-group-related LRR protein 7 (262 aa).

9 LRR repeats span residues tryptophan 19–valine 42, glycine 43–leucine 66, asparagine 68–leucine 89, arginine 90–leucine 112, serine 113–leucine 135, asparagine 137–cysteine 158, serine 159–leucine 181, valine 182–aspartate 204, and lysine 206–glutamate 231.

It belongs to the SHOC2 family. Widely expressed and preferentially in leaf sheathes.

In terms of biological role, leucine-rich repeat protein that likely mediates protein interactions, possibly in the context of signal transduction. The chain is Plant intracellular Ras-group-related LRR protein 7 (IRL7) from Oryza sativa subsp. japonica (Rice).